The following is an 832-amino-acid chain: Prickle-like protein 1 (832 aa).

In terms of domain architecture, PET spans 14–122; sequence FGCQRSSTSD…TIKLLSRAVM (109 aa). LIM zinc-binding domains lie at 124–188, 189–249, and 250–313; these read AVCE…ELLK, PRCS…LYAE, and YCET…EDIH. Residues 314–342 are disordered; that stretch reads ASDSSDSAFQSARSRDSRRSVRMGRSSRS. Phosphoserine is present on residues serine 315, serine 592, and serine 595. 2 disordered regions span residues 663–688 and 765–832; these read HFEE…DNAL and SSST…CIIS. The span at 670–681 shows a compositional bias: basic residues; it reads RPHHHRHRRSRK. Serine 684 carries the post-translational modification Phosphoserine. Positions 798–815 are enriched in polar residues; it reads DLSSPASALPTPQFTQRT. Residues 816 to 832 are compositionally biased toward basic residues; that stretch reads TKSKKKKGHKGKNCIIS. Residue cysteine 829 is modified to Cysteine methyl ester. Residue cysteine 829 is the site of S-farnesyl cysteine attachment. Positions 830-832 are cleaved as a propeptide — removed in mature form; it reads IIS.

Belongs to the prickle / espinas / testin family. Interacts with REST.

The protein localises to the nucleus membrane. The protein resides in the cytoplasm. It is found in the cytosol. Its function is as follows. Involved in the planar cell polarity pathway that controls convergent extension during gastrulation and neural tube closure. Convergent extension is a complex morphogenetic process during which cells elongate, move mediolaterally, and intercalate between neighboring cells, leading to convergence toward the mediolateral axis and extension along the anteroposterior axis. Necessary for nuclear localization of REST. May serve as nuclear receptor. The chain is Prickle-like protein 1 (Prickle1) from Mus musculus (Mouse).